The sequence spans 91 residues: Small ribosomal subunit protein uS19 (91 aa).

The protein belongs to the universal ribosomal protein uS19 family.

Its function is as follows. Protein S19 forms a complex with S13 that binds strongly to the 16S ribosomal RNA. The sequence is that of Small ribosomal subunit protein uS19 from Lachnospira eligens (strain ATCC 27750 / DSM 3376 / VPI C15-48 / C15-B4) (Eubacterium eligens).